A 338-amino-acid polypeptide reads, in one-letter code: DNA-directed RNA polymerase subunit alpha (338 aa).

The alpha N-terminal domain (alpha-NTD) stretch occupies residues 1–226 (MLIAQRPSLT…ELFGLARELN (226 aa)). The alpha C-terminal domain (alpha-CTD) stretch occupies residues 243–338 (LAADLVMPIE…DAGFLETEHY (96 aa)).

The protein belongs to the RNA polymerase alpha chain family. As to quaternary structure, homodimer. The RNAP catalytic core consists of 2 alpha, 1 beta, 1 beta' and 1 omega subunit. When a sigma factor is associated with the core the holoenzyme is formed, which can initiate transcription.

The enzyme catalyses RNA(n) + a ribonucleoside 5'-triphosphate = RNA(n+1) + diphosphate. Its function is as follows. DNA-dependent RNA polymerase catalyzes the transcription of DNA into RNA using the four ribonucleoside triphosphates as substrates. The polypeptide is DNA-directed RNA polymerase subunit alpha (Streptomyces avermitilis (strain ATCC 31267 / DSM 46492 / JCM 5070 / NBRC 14893 / NCIMB 12804 / NRRL 8165 / MA-4680)).